The chain runs to 997 residues: Kinesin-like protein KIF19 (997 aa).

A Kinesin motor domain is found at 11–346; the sequence is QLTVALRIRP…LTYADRAKNI (336 aa). Position 104–111 (104–111) interacts with ATP; sequence GPTGCGKT. Residues 360–437 adopt a coiled-coil conformation; sequence HIAQYTSIIS…REQMDIRRQL (78 aa). A compositionally biased stretch (basic and acidic residues) spans 468 to 491; the sequence is RARKWRDEHRKETYGKDDSEKDSD. The interval 468–503 is disordered; sequence RARKWRDEHRKETYGKDDSEKDSDTGDDQSDFIEPP. Residues 508 to 577 adopt a coiled-coil conformation; sequence ARETIQILEG…ELEIENTEMQ (70 aa). Disordered regions lie at residues 662-690, 792-811, and 848-890; these read NLTA…RNPI, GDRL…SMSE, and GGGS…SRSF. Composition is skewed to basic and acidic residues over residues 792-802 and 869-880; these read GDRLQPMKERS and QKLEKREESLEV. Residues 861-889 adopt a coiled-coil conformation; sequence HRTQKKQAQKLEKREESLEVKRRKKRSRS.

It belongs to the TRAFAC class myosin-kinesin ATPase superfamily. Kinesin family.

It is found in the cytoplasm. Its subcellular location is the cytoskeleton. The protein localises to the cell projection. It localises to the cilium. Plus end-directed microtubule-dependent motor protein that regulates the length of motile cilia by mediating depolymerization of microtubules at ciliary tips. This Xenopus laevis (African clawed frog) protein is Kinesin-like protein KIF19 (kif19).